The chain runs to 479 residues: Something about silencing protein 10 (479 aa).

Residues 1–10 (MVGRSRRRGA) show a composition bias toward basic residues. 2 disordered regions span residues 1–45 (MVGR…SYYQ) and 62–166 (KGWN…EEAQ). Arg-8 is modified (omega-N-methylarginine). Residues 11-21 (AKWAAVRAKAG) are compositionally biased toward low complexity. Position 37 is a phosphoserine (Ser-37). Positions 69–111 (SGDEEDGEEEEEEVLALDMDDEDDEDGGNAGEEEEEENADDDG) are enriched in acidic residues. The residue at position 144 (Lys-144) is an N6-acetyllysine; alternate. Lys-144 is covalently cross-linked (Glycyl lysine isopeptide (Lys-Gly) (interchain with G-Cter in SUMO2); alternate). Ser-150 is modified (phosphoserine). Positions 153–165 (EAEEEEREEEEEA) are enriched in acidic residues. Thr-362 bears the Phosphothreonine mark. Phosphoserine occurs at positions 365 and 368. Arg-385 is modified (citrulline). The interval 419-466 (RGLTPRRKKIDRNPRVKHREKFRRAKIRRRGQVREVRKEEQRYSGELS) is disordered. Residues 422 to 449 (TPRRKKIDRNPRVKHREKFRRAKIRRRG) are compositionally biased toward basic residues. The span at 450 to 461 (QVREVRKEEQRY) shows a compositional bias: basic and acidic residues.

This sequence belongs to the SAS10 family. Part of the small subunit (SSU) processome, composed of more than 70 proteins and the RNA chaperone small nucleolar RNA (snoRNA) U3. Citrullinated by PADI4.

It localises to the nucleus. The protein resides in the nucleolus. Its function is as follows. Essential for gene silencing: has a role in the structure of silenced chromatin. Plays a role in the developing brain. Part of the small subunit (SSU) processome, first precursor of the small eukaryotic ribosomal subunit. During the assembly of the SSU processome in the nucleolus, many ribosome biogenesis factors, an RNA chaperone and ribosomal proteins associate with the nascent pre-rRNA and work in concert to generate RNA folding, modifications, rearrangements and cleavage as well as targeted degradation of pre-ribosomal RNA by the RNA exosome. This Homo sapiens (Human) protein is Something about silencing protein 10.